Reading from the N-terminus, the 116-residue chain is Large ribosomal subunit protein bL19 (116 aa).

This sequence belongs to the bacterial ribosomal protein bL19 family.

Its function is as follows. This protein is located at the 30S-50S ribosomal subunit interface and may play a role in the structure and function of the aminoacyl-tRNA binding site. This Azotobacter vinelandii (strain DJ / ATCC BAA-1303) protein is Large ribosomal subunit protein bL19.